The following is a 245-amino-acid chain: E3 ubiquitin-protein ligase RNF138 (245 aa).

A2 is modified (N-acetylalanine). The RING-type zinc finger occupies 18–58 (CPVCQEVLKTPVRTAACQHVFCRKCFLTAMRESGIHCPLCR). Residues C86, C89, H101, and C105 each contribute to the Zn(2+) site. Residues 86–105 (CRCCAKQIKFYRMRHHYKSC) form a C2HC RNF-type zinc finger. Residues 128–153 (VGNSNRSETSASDNIETYQENTGSSG) are disordered. 2 C2H2-type zinc fingers span residues 157-180 (FKCP…NSNH) and 187-215 (VTCP…NQRH). The UIM domain maps to 225–243 (LQLDEETQYQTAVEESFQV).

In terms of assembly, interacts with NLK. Interacts with XRCC5/Ku80. Interacts with RBBP8/CtIP. Post-translationally, auto-ubiquitinated.

Its subcellular location is the chromosome. The enzyme catalyses S-ubiquitinyl-[E2 ubiquitin-conjugating enzyme]-L-cysteine + [acceptor protein]-L-lysine = [E2 ubiquitin-conjugating enzyme]-L-cysteine + N(6)-ubiquitinyl-[acceptor protein]-L-lysine.. It functions in the pathway protein modification; protein ubiquitination. Functionally, E3 ubiquitin-protein ligase involved in DNA damage response by promoting DNA resection and homologous recombination. Recruited to sites of double-strand breaks following DNA damage and specifically promotes double-strand break repair via homologous recombination. Two different, non-exclusive, mechanisms have been proposed. According to a report, regulates the choice of double-strand break repair by favoring homologous recombination over non-homologous end joining (NHEJ): acts by mediating ubiquitination of XRCC5/Ku80, leading to remove the Ku complex from DNA breaks, thereby promoting homologous recombination. According to another report, cooperates with UBE2Ds E2 ubiquitin ligases (UBE2D1, UBE2D2, UBE2D3 or UBE2D4) to promote homologous recombination by mediating ubiquitination of RBBP8/CtIP. Together with NLK, involved in the ubiquitination and degradation of TCF/LEF. Also exhibits auto-ubiquitination activity in combination with UBE2K. May act as a negative regulator in the Wnt/beta-catenin-mediated signaling pathway. The chain is E3 ubiquitin-protein ligase RNF138 (RNF138) from Bos taurus (Bovine).